We begin with the raw amino-acid sequence, 207 residues long: Urease accessory protein UreG (207 aa).

GTP is bound at residue Gly-14–Thr-21.

It belongs to the SIMIBI class G3E GTPase family. UreG subfamily. As to quaternary structure, homodimer. UreD, UreF and UreG form a complex that acts as a GTP-hydrolysis-dependent molecular chaperone, activating the urease apoprotein by helping to assemble the nickel containing metallocenter of UreC. The UreE protein probably delivers the nickel.

Its subcellular location is the cytoplasm. Facilitates the functional incorporation of the urease nickel metallocenter. This process requires GTP hydrolysis, probably effectuated by UreG. The sequence is that of Urease accessory protein UreG from Rhodopseudomonas palustris (strain BisB18).